A 224-amino-acid chain; its full sequence is Casparian strip membrane protein 3 (224 aa).

The disordered stretch occupies residues 1-30 (MESKKEGVASAPTSPESRRTRSNGKGKTIA). Residues 1–57 (MESKKEGVASAPTSPESRRTRSNGKGKTIAEATPPSVTVVSTKVTPSPRGGWRKGAA) are Cytoplasmic-facing. The helical transmembrane segment at 58–78 (ILDFILRLGAISSAIGAAAVM) threads the bilayer. Topologically, residues 79–105 (GNNEQILPFFTQFFQFHVQWDDFPMFQ) are extracellular. The chain crosses the membrane as a helical span at residues 106-126 (FFVFANGAAVVFLILSLPFSI). The Cytoplasmic segment spans residues 127–138 (VCIVRPFAVGPR). The helical transmembrane segment at 139–159 (LLLVIVDIFAMALVIAAASAA) threads the bilayer. Residues 160-191 (AAVVYLAHNGSQDANWIAICQQYTDFCQVTSQ) are Extracellular-facing. N-linked (GlcNAc...) asparagine glycosylation is present at Asn-168. The helical transmembrane segment at 192-212 (AVVASFVAAVFLICLIVLSSV) threads the bilayer. At 213–224 (ALKKGLKREFGW) the chain is on the cytoplasmic side.

This sequence belongs to the Casparian strip membrane proteins (CASP) family. Homodimer and heterodimers.

Its subcellular location is the cell membrane. Its function is as follows. Regulates membrane-cell wall junctions and localized cell wall deposition. Required for establishment of the Casparian strip membrane domain (CSD) and the subsequent formation of Casparian strips, a cell wall modification of the root endodermis that determines an apoplastic barrier between the intraorganismal apoplasm and the extraorganismal apoplasm and prevents lateral diffusion. The protein is Casparian strip membrane protein 3 of Vigna unguiculata (Cowpea).